The primary structure comprises 332 residues: 4-hydroxythreonine-4-phosphate dehydrogenase (332 aa).

His-136 and Thr-137 together coordinate substrate. A divalent metal cation-binding residues include His-166, His-211, and His-266. Lys-274, Asn-283, and Arg-292 together coordinate substrate.

The protein belongs to the PdxA family. As to quaternary structure, homodimer. The cofactor is Zn(2+). It depends on Mg(2+) as a cofactor. Co(2+) is required as a cofactor.

It localises to the cytoplasm. The enzyme catalyses 4-(phosphooxy)-L-threonine + NAD(+) = 3-amino-2-oxopropyl phosphate + CO2 + NADH. It participates in cofactor biosynthesis; pyridoxine 5'-phosphate biosynthesis; pyridoxine 5'-phosphate from D-erythrose 4-phosphate: step 4/5. Catalyzes the NAD(P)-dependent oxidation of 4-(phosphooxy)-L-threonine (HTP) into 2-amino-3-oxo-4-(phosphooxy)butyric acid which spontaneously decarboxylates to form 3-amino-2-oxopropyl phosphate (AHAP). This is 4-hydroxythreonine-4-phosphate dehydrogenase from Wigglesworthia glossinidia brevipalpis.